The following is a 602-amino-acid chain: Wings apart-like protein homolog 1 (602 aa).

The disordered stretch occupies residues 34–66 (NKQKRSPGQTVSKRLHKKQRVVSNPDLSLPSSP). Residues 54–66 (VVSNPDLSLPSSP) show a composition bias toward polar residues. In terms of domain architecture, WAPL spans 160-492 (IQMKSIHELR…LGLVEESHEF (333 aa)).

This sequence belongs to the WAPL family.

Its subcellular location is the nucleus. It localises to the chromosome. Regulator of sister chromatid cohesion in mitosis which negatively regulates cohesin association with chromatin. The chain is Wings apart-like protein homolog 1 (wpl1) from Schizosaccharomyces pombe (strain 972 / ATCC 24843) (Fission yeast).